The primary structure comprises 210 residues: Protein-methionine-sulfoxide reductase heme-binding subunit MsrQ (210 aa).

4 helical membrane passes run 15 to 35, 89 to 109, 122 to 142, and 160 to 180; these read DTLVYGLVWLACFAPLAWLAW, LFAFAYVALHLLAYVGIDLFF, PFITLGMLGFMLLIPLAVTST, and LVYLIVPLGVAHYYLLVKADH.

It belongs to the MsrQ family. Heterodimer of a catalytic subunit (MsrP) and a heme-binding subunit (MsrQ). FMN serves as cofactor. The cofactor is heme b.

The protein resides in the cell inner membrane. Part of the MsrPQ system that repairs oxidized periplasmic proteins containing methionine sulfoxide residues (Met-O), using respiratory chain electrons. Thus protects these proteins from oxidative-stress damage caused by reactive species of oxygen and chlorine generated by the host defense mechanisms. MsrPQ is essential for the maintenance of envelope integrity under bleach stress, rescuing a wide series of structurally unrelated periplasmic proteins from methionine oxidation. MsrQ provides electrons for reduction to the reductase catalytic subunit MsrP, using the quinone pool of the respiratory chain. The sequence is that of Protein-methionine-sulfoxide reductase heme-binding subunit MsrQ from Caulobacter vibrioides (strain ATCC 19089 / CIP 103742 / CB 15) (Caulobacter crescentus).